A 250-amino-acid chain; its full sequence is 3alpha-hydroxysteroid dehydrogenase (250 aa).

N93, Y158, and K162 together coordinate NADP(+). The active-site Proton acceptor is Y158.

It belongs to the short-chain dehydrogenases/reductases (SDR) family.

It catalyses the reaction lithocholate + NADP(+) = 3-oxo-5beta-cholan-24-oate + NADPH + H(+). It carries out the reaction deoxycholate + NADP(+) = 12alpha-hydroxy-3-oxo-5beta-cholan-24-oate + NADPH + H(+). The enzyme catalyses deoxycholate + NAD(+) = 12alpha-hydroxy-3-oxo-5beta-cholan-24-oate + NADH + H(+). The catalysed reaction is cholate + NADP(+) = 7alpha,12alpha-dihydroxy-3-oxo-5beta-cholan-24-oate + NADPH + H(+). It catalyses the reaction chenodeoxycholate + NADP(+) = 3-oxochenodeoxycholate + NADPH + H(+). In terms of biological role, involved in the modification of secondary bile acids into iso-bile acids (3beta-bile acids) via epimerization of the 3-OH group through a 3-oxo-intermediate. Catalyzes the oxidation of deoxycholate (DCA) and lithocholate (LCA) to yield 12-alpha-hydroxy-3-oxo-5-beta-cholan-24-oate (3-oxo-DCA) and 3-oxo-5-beta-cholan-24-oate (3-oxo-LCA), respectively. Is also able to catalyze the oxidation of cholate (CA) and chenodeoxycholate (CDCA) into 3-dehydrocholate (3-oxo-CA) and 7-alpha-hydroxy-3-oxo-5-beta-cholan-24-oate (3-oxo-CDCA), respectively. Can also catalyze the reverse reactions in vitro. Accepts both NADPH and NADH as cosubstrates. The conversion of the abundant bile acid DCA into isoDCA by the gut bacterium R.gnavus favors the growth of the keystone commensal genus Bacteroides, since isoDCA is less cytotoxic than its parent compound, DCA; iso-bile acids have thus a potential role in modulating gut community composition. The sequence is that of 3alpha-hydroxysteroid dehydrogenase from Mediterraneibacter gnavus (strain ATCC 29149 / DSM 114966 / JCM 6515 / VPI C7-9) (Ruminococcus gnavus).